The chain runs to 487 residues: N-succinylglutamate 5-semialdehyde dehydrogenase (487 aa).

Residue 221 to 226 coordinates NAD(+); the sequence is GSSDTG. Active-site residues include E244 and C278.

This sequence belongs to the aldehyde dehydrogenase family. AstD subfamily.

It carries out the reaction N-succinyl-L-glutamate 5-semialdehyde + NAD(+) + H2O = N-succinyl-L-glutamate + NADH + 2 H(+). It participates in amino-acid degradation; L-arginine degradation via AST pathway; L-glutamate and succinate from L-arginine: step 4/5. Its function is as follows. Catalyzes the NAD-dependent reduction of succinylglutamate semialdehyde into succinylglutamate. The chain is N-succinylglutamate 5-semialdehyde dehydrogenase from Burkholderia orbicola (strain MC0-3).